A 286-amino-acid chain; its full sequence is Pyridoxal kinase PdxY (286 aa).

Residues serine 9 and 44 to 45 (TQ) contribute to the substrate site. ATP-binding residues include aspartate 111, glutamate 148, and lysine 181. Residue aspartate 222 participates in substrate binding.

It belongs to the pyridoxine kinase family. PdxY subfamily. As to quaternary structure, homodimer. Mg(2+) is required as a cofactor.

It catalyses the reaction pyridoxal + ATP = pyridoxal 5'-phosphate + ADP + H(+). Its pathway is cofactor metabolism; pyridoxal 5'-phosphate salvage; pyridoxal 5'-phosphate from pyridoxal: step 1/1. In terms of biological role, pyridoxal kinase involved in the salvage pathway of pyridoxal 5'-phosphate (PLP). Catalyzes the phosphorylation of pyridoxal to PLP. This Pasteurella multocida (strain Pm70) protein is Pyridoxal kinase PdxY.